The following is a 1336-amino-acid chain: SH3 domain and tetratricopeptide repeat-containing protein 1 (1336 aa).

At Met-1 the chain carries N-acetylmethionine. Disordered regions lie at residues Met-1–Gln-76 and Thr-225–Val-266. Residues Gly-18–Ser-27 are compositionally biased toward gly residues. The segment covering Ala-46–Pro-61 has biased composition (basic and acidic residues). Low complexity-rich tracts occupy residues Pro-62–Pro-74 and Glu-247–Val-266. The SH3 domain occupies Met-305–Pro-368. TPR repeat units follow at residues Ala-560–Ser-593, Val-601–Thr-634, Ala-665–Ser-698, Gly-786–Ala-819, Gly-863–Leu-896, Thr-946–Met-979, Gly-1027–Leu-1063, and Arg-1192–Pro-1225. Tyr-1248 is subject to Phosphotyrosine. A TPR 9 repeat occupies Leu-1277 to Leu-1311.

This is SH3 domain and tetratricopeptide repeat-containing protein 1 (SH3TC1) from Homo sapiens (Human).